Reading from the N-terminus, the 508-residue chain is tRNA-2-methylthio-N(6)-dimethylallyladenosine synthase (508 aa).

The segment at 1-21 (MNEEQRKASGQVSSSDKKSEK) is disordered. The MTTase N-terminal domain maps to 65–183 (RKFYIRTYGC…LPELLSECYL (119 aa)). Cys74, Cys110, Cys144, Cys220, Cys224, and Cys227 together coordinate [4Fe-4S] cluster. The Radical SAM core domain occupies 206-436 (RQGKIKGWVN…NALVNEISAK (231 aa)). Residues 439-502 (KEYEGQTVEV…TWSLDGEMVG (64 aa)) form the TRAM domain.

This sequence belongs to the methylthiotransferase family. MiaB subfamily. In terms of assembly, monomer. [4Fe-4S] cluster serves as cofactor.

It is found in the cytoplasm. The enzyme catalyses N(6)-dimethylallyladenosine(37) in tRNA + (sulfur carrier)-SH + AH2 + 2 S-adenosyl-L-methionine = 2-methylsulfanyl-N(6)-dimethylallyladenosine(37) in tRNA + (sulfur carrier)-H + 5'-deoxyadenosine + L-methionine + A + S-adenosyl-L-homocysteine + 2 H(+). Catalyzes the methylthiolation of N6-(dimethylallyl)adenosine (i(6)A), leading to the formation of 2-methylthio-N6-(dimethylallyl)adenosine (ms(2)i(6)A) at position 37 in tRNAs that read codons beginning with uridine. The protein is tRNA-2-methylthio-N(6)-dimethylallyladenosine synthase of Bacillus pumilus (strain SAFR-032).